Consider the following 238-residue polypeptide: Protein A47 (238 aa).

It belongs to the orthopoxvirus A47 protein family.

This is Protein A47 from Vaccinia virus (strain Ankara) (VACV).